Consider the following 273-residue polypeptide: Outer surface protein A (273 aa).

The first 16 residues, 1-16 (MKKYLLGIGLILALIA), serve as a signal peptide directing secretion. Cys17 carries the N-palmitoyl cysteine lipid modification. Residue Cys17 is the site of S-diacylglycerol cysteine attachment.

Belongs to the OspA lipoprotein family.

The protein resides in the cell outer membrane. It is found in the cell surface. The chain is Outer surface protein A from Borreliella burgdorferi (strain N40) (Borrelia burgdorferi).